A 127-amino-acid polypeptide reads, in one-letter code: Glycine cleavage system H protein (127 aa).

Residues 22 to 104 (EAVIGITHFA…YTEGWMLRVK (83 aa)) form the Lipoyl-binding domain. At lysine 63 the chain carries N6-lipoyllysine.

This sequence belongs to the GcvH family. In terms of assembly, the glycine cleavage system is composed of four proteins: P, T, L and H. Requires (R)-lipoate as cofactor.

In terms of biological role, the glycine cleavage system catalyzes the degradation of glycine. The H protein shuttles the methylamine group of glycine from the P protein to the T protein. The protein is Glycine cleavage system H protein of Nitratidesulfovibrio vulgaris (strain DP4) (Desulfovibrio vulgaris).